We begin with the raw amino-acid sequence, 68 residues long: Ferredoxin Fdx (68 aa).

Positions 12, 13, 16, 18, and 56 each coordinate [3Fe-4S] cluster.

[3Fe-4S] cluster serves as cofactor.

Ferredoxin that is the redox partner of cytochrome CYP51, a sterol 14alpha-demethylase encoded by an adjacent gene. The polypeptide is Ferredoxin Fdx (Mycobacterium tuberculosis (strain ATCC 25618 / H37Rv)).